A 414-amino-acid chain; its full sequence is WW domain-containing oxidoreductase (414 aa).

Residues 1 to 23 are disordered; that stretch reads MAALRYAGLDDTDSEDELPPGWE. The residue at position 12 (T12) is a Phosphothreonine. S14 carries the phosphoserine modification. Residues 16 to 49 enclose the WW 1 domain; sequence DELPPGWEERTTKDGWVYYANHTEEKTQWEHPKT. Position 33 is a phosphotyrosine (Y33). The short motif at 50 to 55 is the Nuclear localization signal element; the sequence is GKRKRV. A WW 2 domain is found at 57–90; that stretch reads GDLPYGWEQETDENGQVFFVDHINKRTTYLDPRL. The interval 125 to 414 is interaction with MAPT; it reads KVVVVTGANS…IQERLGSQSG (290 aa). 131–137 is a binding site for NADP(+); it reads GANSGIG. The segment at 209 to 273 is mediates targeting to the mitochondria; that stretch reads CNAATFALPW…RFTDINDSLG (65 aa). S260 is a substrate binding site. The residue at position 287 (Y287) is a Phosphotyrosine; by TNK2. The Proton acceptor role is filled by Y293.

This sequence belongs to the short-chain dehydrogenases/reductases (SDR) family. In terms of assembly, interacts with TP53, p73/TP73 and MAPK8. Interacts with MAPT/TAU, RUNX2 and HYAL2. Forms a ternary complex with TP53 and MDM2. Interacts with ERBB4, LITAF and WBP1. Interacts with DVL1, DVL2 and DVL3. May interact with FAM189B and SCOTIN. Interacts with TNK2. Interacts with TMEM207. Interacts (via WW domain) with VOPP1. In terms of processing, phosphorylated upon genotoxic stress. Phosphorylation of Tyr-33 regulates interaction with TP53, TP73 and MAPK8. May also regulate proapoptotic activity. Phosphorylation by TNK2 is associated with polyubiquitination and degradation. Post-translationally, ubiquitinated when phosphorylated by TNK2, leading to its degradation. Widely expressed. Strongly expressed in testis, prostate, and ovary. Overexpressed in cancer cell lines. Isoform 5 and isoform 6 may only be expressed in tumor cell lines.

It is found in the cytoplasm. Its subcellular location is the nucleus. The protein resides in the mitochondrion. It localises to the golgi apparatus. The protein localises to the lysosome. Putative oxidoreductase. Acts as a tumor suppressor and plays a role in apoptosis. Required for normal bone development. May function synergistically with p53/TP53 to control genotoxic stress-induced cell death. Plays a role in TGFB1 signaling and TGFB1-mediated cell death. May also play a role in tumor necrosis factor (TNF)-mediated cell death. Inhibits Wnt signaling, probably by sequestering DVL2 in the cytoplasm. The chain is WW domain-containing oxidoreductase (WWOX) from Homo sapiens (Human).